A 90-amino-acid polypeptide reads, in one-letter code: Small ribosomal subunit protein bS18B (90 aa).

The protein belongs to the bacterial ribosomal protein bS18 family. In terms of assembly, part of the 30S ribosomal subunit. Forms a tight heterodimer with protein bS6.

Its function is as follows. Binds as a heterodimer with protein bS6 to the central domain of the 16S rRNA, where it helps stabilize the platform of the 30S subunit. The chain is Small ribosomal subunit protein bS18B from Roseiflexus sp. (strain RS-1).